A 206-amino-acid chain; its full sequence is NADH-quinone oxidoreductase subunit C (206 aa).

Belongs to the complex I 30 kDa subunit family. As to quaternary structure, NDH-1 is composed of 14 different subunits. Subunits NuoB, C, D, E, F, and G constitute the peripheral sector of the complex.

Its subcellular location is the cell inner membrane. It carries out the reaction a quinone + NADH + 5 H(+)(in) = a quinol + NAD(+) + 4 H(+)(out). In terms of biological role, NDH-1 shuttles electrons from NADH, via FMN and iron-sulfur (Fe-S) centers, to quinones in the respiratory chain. The immediate electron acceptor for the enzyme in this species is believed to be ubiquinone. Couples the redox reaction to proton translocation (for every two electrons transferred, four hydrogen ions are translocated across the cytoplasmic membrane), and thus conserves the redox energy in a proton gradient. The polypeptide is NADH-quinone oxidoreductase subunit C (Bordetella avium (strain 197N)).